The primary structure comprises 411 residues: Adenylosuccinate synthetase (411 aa).

GTP contacts are provided by residues 11 to 17 (GDEGKGK) and 39 to 41 (GHT). Aspartate 12 (proton acceptor) is an active-site residue. Mg(2+)-binding residues include aspartate 12 and glycine 39. Residues 12-15 (DEGK), 37-40 (NAGH), threonine 121, arginine 135, glutamine 215, threonine 230, and arginine 294 contribute to the IMP site. Catalysis depends on histidine 40, which acts as the Proton donor. 290 to 296 (TTTKRPR) is a substrate binding site. GTP is bound by residues arginine 296, 322 to 324 (KLD), and 400 to 402 (STS).

Belongs to the adenylosuccinate synthetase family. As to quaternary structure, homodimer. Requires Mg(2+) as cofactor.

The protein resides in the cytoplasm. It carries out the reaction IMP + L-aspartate + GTP = N(6)-(1,2-dicarboxyethyl)-AMP + GDP + phosphate + 2 H(+). The protein operates within purine metabolism; AMP biosynthesis via de novo pathway; AMP from IMP: step 1/2. Plays an important role in the de novo pathway of purine nucleotide biosynthesis. Catalyzes the first committed step in the biosynthesis of AMP from IMP. In Helicobacter pylori (strain HPAG1), this protein is Adenylosuccinate synthetase.